A 100-amino-acid polypeptide reads, in one-letter code: Urease subunit gamma (100 aa).

It belongs to the urease gamma subunit family. Heterotrimer of UreA (gamma), UreB (beta) and UreC (alpha) subunits. Three heterotrimers associate to form the active enzyme.

It is found in the cytoplasm. The enzyme catalyses urea + 2 H2O + H(+) = hydrogencarbonate + 2 NH4(+). It participates in nitrogen metabolism; urea degradation; CO(2) and NH(3) from urea (urease route): step 1/1. This is Urease subunit gamma from Streptomyces avermitilis (strain ATCC 31267 / DSM 46492 / JCM 5070 / NBRC 14893 / NCIMB 12804 / NRRL 8165 / MA-4680).